Here is a 256-residue protein sequence, read N- to C-terminus: Glutamate racemase (256 aa).

Residues 5–6 (DS) and 37–38 (YG) each bind substrate. Catalysis depends on cysteine 69, which acts as the Proton donor/acceptor. 70–71 (NT) is a substrate binding site. Cysteine 181 functions as the Proton donor/acceptor in the catalytic mechanism. A substrate-binding site is contributed by 182–183 (TH).

Belongs to the aspartate/glutamate racemases family.

It carries out the reaction L-glutamate = D-glutamate. The protein operates within cell wall biogenesis; peptidoglycan biosynthesis. In terms of biological role, provides the (R)-glutamate required for cell wall biosynthesis. The polypeptide is Glutamate racemase (Buchnera aphidicola subsp. Schizaphis graminum (strain Sg)).